The following is a 592-amino-acid chain: Aspartate--tRNA ligase (592 aa).

An L-aspartate-binding site is contributed by E173. The aspartate stretch occupies residues 197–200 (QLFK). R219 provides a ligand contact to L-aspartate. ATP-binding positions include 219-221 (RDE) and Q228. H448 lines the L-aspartate pocket. E482 lines the ATP pocket. Residue R489 coordinates L-aspartate. 534 to 537 (GLDR) serves as a coordination point for ATP.

This sequence belongs to the class-II aminoacyl-tRNA synthetase family. Type 1 subfamily. Homodimer.

It localises to the cytoplasm. The catalysed reaction is tRNA(Asp) + L-aspartate + ATP = L-aspartyl-tRNA(Asp) + AMP + diphosphate. In terms of biological role, catalyzes the attachment of L-aspartate to tRNA(Asp) in a two-step reaction: L-aspartate is first activated by ATP to form Asp-AMP and then transferred to the acceptor end of tRNA(Asp). The polypeptide is Aspartate--tRNA ligase (Shewanella putrefaciens (strain CN-32 / ATCC BAA-453)).